Reading from the N-terminus, the 232-residue chain is MSVRQTTADVVVVDYGLGNLRSVTRGLERAGANVSLSEDPAEFDAADGIVLPGVGAFSEGMDNAGPFREALVEQAEAGKPLFGICLGMQMLLTTSEEADHEGQGDAEGLDLIPGKNVRFSRDQTVPHMGWNELDVTRDHPLVEGVDSVGSKTPRADGTGGSVDGEHAYFVHSYYAVPDDESATVATTDYGTDFASIVANDAGNVFGTQFHPEKSGETGLRILRNYVDYCLDH.

The Glutamine amidotransferase type-1 domain maps to 9–232 (DVVVVDYGLG…RNYVDYCLDH (224 aa)). The active-site Nucleophile is cysteine 85. The interval 143–159 (EGVDSVGSKTPRADGTG) is insert. Active-site residues include histidine 210 and glutamate 212.

As to quaternary structure, heterodimer of HisH and HisF.

It is found in the cytoplasm. The catalysed reaction is 5-[(5-phospho-1-deoxy-D-ribulos-1-ylimino)methylamino]-1-(5-phospho-beta-D-ribosyl)imidazole-4-carboxamide + L-glutamine = D-erythro-1-(imidazol-4-yl)glycerol 3-phosphate + 5-amino-1-(5-phospho-beta-D-ribosyl)imidazole-4-carboxamide + L-glutamate + H(+). It carries out the reaction L-glutamine + H2O = L-glutamate + NH4(+). It functions in the pathway amino-acid biosynthesis; L-histidine biosynthesis; L-histidine from 5-phospho-alpha-D-ribose 1-diphosphate: step 5/9. Its function is as follows. IGPS catalyzes the conversion of PRFAR and glutamine to IGP, AICAR and glutamate. The HisH subunit catalyzes the hydrolysis of glutamine to glutamate and ammonia as part of the synthesis of IGP and AICAR. The resulting ammonia molecule is channeled to the active site of HisF. This is Imidazole glycerol phosphate synthase subunit HisH (hisH) from Haloarcula marismortui (strain ATCC 43049 / DSM 3752 / JCM 8966 / VKM B-1809) (Halobacterium marismortui).